Consider the following 212-residue polypeptide: Probable GTP-binding protein EngB (212 aa).

The region spanning Ala38 to Leu210 is the EngB-type G domain. Residues Gly46–Ser53, Gly73–Gln77, Asp91–Gly94, Thr158–Asp161, and Val189–Ser191 contribute to the GTP site. 2 residues coordinate Mg(2+): Ser53 and Thr75.

This sequence belongs to the TRAFAC class TrmE-Era-EngA-EngB-Septin-like GTPase superfamily. EngB GTPase family. Requires Mg(2+) as cofactor.

Necessary for normal cell division and for the maintenance of normal septation. This is Probable GTP-binding protein EngB from Rickettsia bellii (strain OSU 85-389).